A 171-amino-acid chain; its full sequence is Large ribosomal subunit protein bL17 (171 aa).

Positions 140 to 152 are enriched in basic and acidic residues; that stretch reads KREIQTKAREEKR. Residues 140-171 are disordered; it reads KREIQTKAREEKRATRKSNSAPVSKETTSKKK. Polar residues predominate over residues 156 to 165; that stretch reads KSNSAPVSKE.

This sequence belongs to the bacterial ribosomal protein bL17 family. Part of the 50S ribosomal subunit. Contacts protein L32.

The sequence is that of Large ribosomal subunit protein bL17 from Leptospira interrogans serogroup Icterohaemorrhagiae serovar copenhageni (strain Fiocruz L1-130).